We begin with the raw amino-acid sequence, 100 residues long: Large ribosomal subunit protein uL23 (100 aa).

This sequence belongs to the universal ribosomal protein uL23 family. In terms of assembly, part of the 50S ribosomal subunit. Contacts protein L29, and trigger factor when it is bound to the ribosome.

Its function is as follows. One of the early assembly proteins it binds 23S rRNA. One of the proteins that surrounds the polypeptide exit tunnel on the outside of the ribosome. Forms the main docking site for trigger factor binding to the ribosome. The polypeptide is Large ribosomal subunit protein uL23 (Buchnera aphidicola subsp. Baizongia pistaciae (strain Bp)).